The sequence spans 105 residues: Replication restart protein PriB (105 aa).

One can recognise an SSB domain in the interval 1–102 (MTANRLTLSG…LHAEQIELID (102 aa)).

Belongs to the PriB family. In terms of assembly, homodimer. Interacts with PriA and DnaT. Component of the replication restart primosome. Primosome assembly occurs via a 'hand-off' mechanism. PriA binds to replication forks, subsequently PriB then DnaT bind; DnaT then displaces ssDNA to generate the helicase loading substrate.

Its function is as follows. Involved in the restart of stalled replication forks, which reloads the replicative helicase on sites other than the origin of replication; the PriA-PriB pathway is the major replication restart pathway. During primosome assembly it facilitates complex formation between PriA and DnaT on DNA; stabilizes PriA on DNA. Stimulates the DNA unwinding activity of PriA helicase. The sequence is that of Replication restart protein PriB from Erwinia tasmaniensis (strain DSM 17950 / CFBP 7177 / CIP 109463 / NCPPB 4357 / Et1/99).